The sequence spans 861 residues: E3 ubiquitin-protein ligase HECTD3 (861 aa).

Residue alanine 2 is modified to N-acetylalanine. Residue serine 12 is modified to Phosphoserine. The 179-residue stretch at 219-397 folds into the DOC domain; the sequence is DEDLIHFLYD…ASLVRYPRLE (179 aa). Residues 512–857 enclose the HECT domain; the sequence is YEKPLDYRWP…NCVAIDTDMS (346 aa). Cysteine 823 functions as the Glycyl thioester intermediate in the catalytic mechanism.

Interacts with TRIOBP. Interacts with STX8.

It localises to the cytoplasm. The protein resides in the perinuclear region. It carries out the reaction S-ubiquitinyl-[E2 ubiquitin-conjugating enzyme]-L-cysteine + [acceptor protein]-L-lysine = [E2 ubiquitin-conjugating enzyme]-L-cysteine + N(6)-ubiquitinyl-[acceptor protein]-L-lysine.. It participates in protein modification; protein ubiquitination. In terms of biological role, E3 ubiquitin ligases accepts ubiquitin from an E2 ubiquitin-conjugating enzyme in the form of a thioester and then directly transfers the ubiquitin to targeted substrates. Mediates ubiquitination of TRIOBP and its subsequent proteasomal degradation, thus facilitating cell cycle progression by regulating the turn-over of TRIOBP. Also mediates ubiquitination of STX8. The protein is E3 ubiquitin-protein ligase HECTD3 (Hectd3) of Mus musculus (Mouse).